A 146-amino-acid polypeptide reads, in one-letter code: Pre-mRNA-splicing factor cwf14 (146 aa).

The protein belongs to the BUD31 (G10) family. In terms of assembly, belongs to the 40S cdc5-associated complex (or cwf complex), a spliceosome sub-complex reminiscent of a late-stage spliceosome composed of the U2, U5 and U6 snRNAs and at least brr2, cdc5, cwf2/prp3, cwf3/syf1, cwf4/syf3, cwf5/ecm2, spp42/cwf6, cwf7/spf27, cwf8, cwf9, cwf10, cwf11, cwf12, prp45/cwf13, cwf14, cwf15, cwf16, cwf17, cwf18, cwf19, cwf20, cwf21, cwf22, cwf23, cwf24, cwf25, cwf26, cyp7/cwf27, cwf28, cwf29/ist3, lea1, msl1, prp5/cwf1, prp10, prp12/sap130, prp17, prp22, sap61, sap62, sap114, sap145, slu7, smb1, smd1, smd3, smf1, smg1 and syf2.

It localises to the nucleus. Functionally, involved in mRNA splicing where it associates with cdc5 and the other cwf proteins as part of the spliceosome. This chain is Pre-mRNA-splicing factor cwf14 (cwf14), found in Schizosaccharomyces pombe (strain 972 / ATCC 24843) (Fission yeast).